A 423-amino-acid chain; its full sequence is Ribosome biogenesis protein WDR12 homolog (423 aa).

The ubiquitin-like (UBL) domain stretch occupies residues 10–93; the sequence is VQVHLKTKQE…EDAIEIEYVE (84 aa). WD repeat units follow at residues 105–142, 144–186, 193–232, 253–291, 293–332, 338–378, and 382–420; these read LHDD…ILTI, GHTA…NAVE, GHER…AGGD, GHRE…IKTE, STNK…GSIV, GHNA…APLY, and GHGE…VETM.

The protein belongs to the WD repeat WDR12/YTM1 family.

The protein localises to the nucleus. The protein resides in the nucleolus. It localises to the nucleoplasm. Its function is as follows. Required for maturation of ribosomal RNAs and formation of the large ribosomal subunit. The protein is Ribosome biogenesis protein WDR12 homolog of Drosophila willistoni (Fruit fly).